Reading from the N-terminus, the 344-residue chain is Protein MENT (344 aa).

The signal sequence occupies residues Met1–Gly22. The segment covering Asp162–Gln182 has biased composition (polar residues). Residues Asp162–Ser197 are disordered.

In terms of processing, phosphorylation sites are present in the extracellular medium.

It localises to the secreted. In terms of biological role, involved in control of cellular proliferation. Onconcogenic modifier contributing to the tumor suppressor function of DNMT3B. This chain is Protein MENT (Ment), found in Rattus norvegicus (Rat).